The sequence spans 153 residues: Large ribosomal subunit protein uL15 (153 aa).

Basic residues predominate over residues 1–40 (MTDKKRRQRGSRTHGGGTHKNRRGAGNRGGRGRAGRKKHE). Positions 1-60 (MTDKKRRQRGSRTHGGGTHKNRRGAGNRGGRGRAGRKKHEQHNYEDVGKSGFKRPEKTDR) are disordered. Residues 41-60 (QHNYEDVGKSGFKRPEKTDR) show a composition bias toward basic and acidic residues.

This sequence belongs to the universal ribosomal protein uL15 family. As to quaternary structure, part of the 50S ribosomal subunit.

Binds to the 23S rRNA. The chain is Large ribosomal subunit protein uL15 from Halobacterium salinarum (strain ATCC 29341 / DSM 671 / R1).